Consider the following 354-residue polypeptide: Guanine nucleotide-binding protein alpha-3 subunit (354 aa).

The N-myristoyl glycine moiety is linked to residue Gly-2. Cys-4 is lipidated: S-palmitoyl cysteine. The G-alpha domain occupies 32-354 (KVVKLLLLGA…QANLQGCGLY (323 aa)). Residues 35 to 48 (KLLLLGAGECGKST) form a G1 motif region. GTP-binding positions include 40–47 (GAGECGKS), 176–182 (LLSRIKT), 201–205 (DVGGQ), 270–273 (NKKD), and Ala-326. 2 residues coordinate Mg(2+): Ser-47 and Thr-182. Residues 174 to 182 (DILLSRIKT) form a G2 motif region. The segment at 197–206 (FRVFDVGGQR) is G3 motif. Positions 266–273 (ILFLNKKD) are G4 motif. The interval 324–329 (TCATDT) is G5 motif.

This sequence belongs to the G-alpha family. G(q) subfamily. In terms of assembly, g proteins are composed of 3 units; alpha, beta and gamma. The alpha chain contains the guanine nucleotide binding site.

Guanine nucleotide-binding proteins (G proteins) are involved as modulators or transducers in various transmembrane signaling systems. Promotes transcription of 3',5'-cyclic phosphodiesterases pde-1 and pde-5, leading to reduced cGMP levels in sensory neurons. This causes suppression of insulin production and signaling which leads to increased daf-16 activity and contributes to increased adult lifespan and resistance to oxidative stress. In addition, by reducing cGMP levels, inhibits TGF-beta signaling pathways. Involved in behavioral response to P.aeruginosa by controlling the expression of daf-7, a member of the TGF-beta family, in ASJ sensory neurons. In Caenorhabditis briggsae, this protein is Guanine nucleotide-binding protein alpha-3 subunit (gpa-3).